The primary structure comprises 195 residues: PE-PGRS family protein PE_PGRS61 (195 aa).

It belongs to the mycobacterial PE family. PGRS subfamily. Interacts with human TLR2.

It localises to the secreted. It is found in the cell wall. The protein localises to the cell surface. Binding of Ca(2+) to PE_PGRS61 induces conformational changes and increases affinity for TLR2. Its function is as follows. Mediates Ca(2+)-dependent up-regulation of the anti-inflammatory cytokine IL-10. The polypeptide is PE-PGRS family protein PE_PGRS61 (Mycobacterium tuberculosis (strain ATCC 25618 / H37Rv)).